The chain runs to 474 residues: UDP glycosyltransferase 9 (474 aa).

UDP-alpha-D-glucose contacts are provided by residues Ser-296, 349–350 (WC), 367–375 (HCGWNSTLE), and 389–392 (WADQ).

This sequence belongs to the UDP-glycosyltransferase family.

The polypeptide is UDP glycosyltransferase 9 (Catharanthus roseus (Madagascar periwinkle)).